Consider the following 197-residue polypeptide: Peptide deformylase (197 aa).

2 residues coordinate Fe cation: Cys106 and His148. Residue Glu149 is part of the active site. His152 contributes to the Fe cation binding site.

This sequence belongs to the polypeptide deformylase family. Fe(2+) serves as cofactor.

The enzyme catalyses N-terminal N-formyl-L-methionyl-[peptide] + H2O = N-terminal L-methionyl-[peptide] + formate. Its function is as follows. Removes the formyl group from the N-terminal Met of newly synthesized proteins. Requires at least a dipeptide for an efficient rate of reaction. N-terminal L-methionine is a prerequisite for activity but the enzyme has broad specificity at other positions. The chain is Peptide deformylase from Mycobacterium bovis (strain ATCC BAA-935 / AF2122/97).